The following is a 238-amino-acid chain: uncharacterized protein (238 aa).

4 helical membrane-spanning segments follow: residues 13–33, 40–60, 107–127, and 140–160; these read TLFF…FGII, GSVG…LILG, VVLI…FCQV, and VISL…PMAF. 4Fe-4S ferredoxin-type domains are found at residues 178–208 and 204–233; these read PFFQ…TEKL and ITEK…FSYA. Residues C188, C191, C194, C198, C213, C216, C219, and C223 each contribute to the [4Fe-4S] cluster site.

It localises to the cell membrane. This is an uncharacterized protein from Methanocaldococcus jannaschii (strain ATCC 43067 / DSM 2661 / JAL-1 / JCM 10045 / NBRC 100440) (Methanococcus jannaschii).